The primary structure comprises 121 residues: Large ribosomal subunit protein uL24 (121 aa).

It belongs to the universal ribosomal protein uL24 family. As to quaternary structure, part of the 50S ribosomal subunit.

In terms of biological role, one of two assembly initiator proteins, it binds directly to the 5'-end of the 23S rRNA, where it nucleates assembly of the 50S subunit. Functionally, located at the polypeptide exit tunnel on the outside of the subunit. This is Large ribosomal subunit protein uL24 from Methanocorpusculum labreanum (strain ATCC 43576 / DSM 4855 / Z).